A 611-amino-acid polypeptide reads, in one-letter code: Protein Pixie (611 aa).

4Fe-4S ferredoxin-type domains lie at 15-45 and 54-83; these read RIAI…MGKL and KIAS…IINL. 2 consecutive ABC transporter domains span residues 78–323 and 350–570; these read ITII…FLDG and IKRM…LELL. ATP is bound by residues 118-125 and 387-394; these read GQNGIGKS and GENGTGKT.

This sequence belongs to the ABC transporter superfamily. ABCE family. In terms of assembly, interacts with components of eIF3 complex, namely eIF3a, eIF3j, eIF3b, eIF3c and eIF3i. Associates with the 40S ribosome subunit in an ATP-dependent manner and independently from the presence of the eIF3 complex. Forms a complex with Git and Pak; the interaction with Pak may be mediated by pix/dPIX. Post-translationally, ubiquitinated by Cnot4. Ubiquitination mediates the recruitment of autophagy receptors to the mitochondrial outer membrane and initiates mitophagy. In terms of tissue distribution, expressed in early and late larval imaginal disks (at protein level).

The protein resides in the cytoplasm. Plays a role in translation initiation and quality control of translation. Together with pelo and HBS1, is required for 48S complex formation from 80S ribosomes and dissociation of vacant 80S ribosomes. Stabilizes core components of eIF3 complex promoting their assembly into translation initiation-competent complexes. Together with pelo and HBS1, recognizes stalled ribosomes and promotes dissociation of elongation complexes assembled on non-stop mRNAs; this triggers endonucleolytic cleavage of the mRNA, a mechanism to release non-functional ribosomes and to degrade damaged mRNAs as part of the No-Go Decay (NGD) pathway. Plays a role in the regulation of mRNA turnover. Plays a role in quality control of translation of mitochondrial outer membrane-localized mRNA. As part of the Pink1-regulated signaling, ubiquitinated by Cnot4 upon mitochondria damage; this modification generates polyubiquitin signals that recruits autophagy receptors to the mitochondrial outer membrane to initiate mitophagy. Required in the wing disk for cell division and growth as well as cell survival. During muscle embryogenesis, required for the recruitment of Pak to muscle attachments in the embryo, hence may play a role in proper muscle morphogenesis and proper guidance and targeting of subsets of myotubes. The chain is Protein Pixie from Drosophila melanogaster (Fruit fly).